Here is a 145-residue protein sequence, read N- to C-terminus: MLILVNNPKAKYDYHLMESYCAGIVLKGSEVKALSLGQGSLKEAYVFVKNNELFLEQFTIPPYSFAGPLNHASDRIKKLLLNKHEIKQIINKKQQQSLSVIPSKVFFRNGKIKVEIWLAKPKKKFDKRETIKKKTIRRELEAEYR.

The protein belongs to the SmpB family.

It is found in the cytoplasm. In terms of biological role, required for rescue of stalled ribosomes mediated by trans-translation. Binds to transfer-messenger RNA (tmRNA), required for stable association of tmRNA with ribosomes. tmRNA and SmpB together mimic tRNA shape, replacing the anticodon stem-loop with SmpB. tmRNA is encoded by the ssrA gene; the 2 termini fold to resemble tRNA(Ala) and it encodes a 'tag peptide', a short internal open reading frame. During trans-translation Ala-aminoacylated tmRNA acts like a tRNA, entering the A-site of stalled ribosomes, displacing the stalled mRNA. The ribosome then switches to translate the ORF on the tmRNA; the nascent peptide is terminated with the 'tag peptide' encoded by the tmRNA and targeted for degradation. The ribosome is freed to recommence translation, which seems to be the essential function of trans-translation. The sequence is that of SsrA-binding protein from Mycoplasma genitalium (strain ATCC 33530 / DSM 19775 / NCTC 10195 / G37) (Mycoplasmoides genitalium).